A 122-amino-acid polypeptide reads, in one-letter code: Large ribosomal subunit protein uL14c (122 aa).

Belongs to the universal ribosomal protein uL14 family. Part of the 50S ribosomal subunit.

Its subcellular location is the plastid. It localises to the chloroplast. In terms of biological role, binds to 23S rRNA. The sequence is that of Large ribosomal subunit protein uL14c from Lactuca sativa (Garden lettuce).